An 899-amino-acid chain; its full sequence is Conserved oligomeric Golgi complex subunit 3 (899 aa).

The protein belongs to the COG3 family. In terms of assembly, component of the conserved oligomeric Golgi complex which is composed of eight different subunits and is required for normal Golgi morphology and localization.

It localises to the golgi apparatus membrane. Functionally, involved in ER-Golgi transport. This is Conserved oligomeric Golgi complex subunit 3 from Aedes aegypti (Yellowfever mosquito).